A 1068-amino-acid chain; its full sequence is Receptor-like protein 13 (1068 aa).

An N-terminal signal peptide occupies residues 1–23; that stretch reads MEGKLFLGQYLICVILLLGQLHG. Topologically, residues 24–986 are extracellular; sequence YKSCIEKERK…EADESTVDME (963 aa). N-linked (GlcNAc...) asparagine glycosylation is found at Asn59 and Asn97. 19 LRR repeats span residues 104-129, 139-162, 164-187, 188-212, 216-239, 241-264, 265-290, 292-315, 325-349, 350-373, 375-397, 398-423, 424-447, 448-471, 472-497, 499-517, 519-543, 544-567, and 569-594; these read FEDV…LFDD, LRNL…FLNA, TSLT…EFKD, LTNL…DYNS, FRKL…FLNS, TSLK…ELRD, LTNV…LFAL, KLKA…KFAK, WKNM…LTSL, TGLR…LANL, SLEY…LLAN, LSKL…SWKP, KFQL…LLHQ, KDLH…LLEN, NTKL…AHNL, FLNV…NFGW, LPHL…LDNM, KSIE…FLKG, and YNLT…NFTR. The N-linked (GlcNAc...) asparagine glycan is linked to Asn153. An N-linked (GlcNAc...) asparagine glycan is attached at Asn202. Asn279 carries N-linked (GlcNAc...) asparagine glycosylation. The N-linked (GlcNAc...) asparagine glycan is linked to Asn397. N-linked (GlcNAc...) asparagine glycosylation is found at Asn471, Asn482, and Asn501. N-linked (GlcNAc...) asparagine glycans are attached at residues Asn570 and Asn591. The stretch at 596-615 is one LRR 20; degenerate repeat; that stretch reads WVMSMDNNLFTGNIGKGFRS. 5 LRR repeats span residues 616–639, 641–664, 665–688, 690–710, and 711–734; these read LPSL…WIGE, QGLF…LFNI, SYLQ…VSSI, HGAV…DTLL, and LNVI…INTQ. An N-linked (GlcNAc...) asparagine glycan is attached at Asn663. The N-linked (GlcNAc...) asparagine glycan is linked to Asn700. N-linked (GlcNAc...) asparagine glycosylation is found at Asn735, Asn745, Asn771, Asn780, and Asn822. LRR repeat units follow at residues 736–757 and 758–781; these read ISIL…FCSL and SNIQ…LSNT. LRR repeat units follow at residues 846-870, 871-893, 895-918, and 920-943; these read LKLL…LGGL, VELE…SFSG, KNVE…LTDM, and SLAV…QFNT. 2 N-linked (GlcNAc...) asparagine glycosylation sites follow: Asn877 and Asn882. 2 N-linked (GlcNAc...) asparagine glycosylation sites follow: Asn925 and Asn930. The chain crosses the membrane as a helical span at residues 987 to 1007; it reads SFYWSFVAAYVTILLGILASL. Residues 1008 to 1068 are Cytoplasmic-facing; sequence SFDSPWSRAW…PPALFHKTRT (61 aa).

The protein belongs to the RLP family.

The protein resides in the cell membrane. This Arabidopsis thaliana (Mouse-ear cress) protein is Receptor-like protein 13.